A 341-amino-acid polypeptide reads, in one-letter code: Glycerol-3-phosphate dehydrogenase [NAD(P)+] (341 aa).

4 residues coordinate NADPH: Ser-15, Trp-16, Arg-36, and Lys-110. Sn-glycerol 3-phosphate contacts are provided by Lys-110, Gly-139, and Ser-141. Ala-143 contributes to the NADPH binding site. Residues Lys-194, Asp-247, Ser-257, Arg-258, and Asn-259 each contribute to the sn-glycerol 3-phosphate site. The Proton acceptor role is filled by Lys-194. Arg-258 is a binding site for NADPH. Positions 282 and 284 each coordinate NADPH.

It belongs to the NAD-dependent glycerol-3-phosphate dehydrogenase family.

Its subcellular location is the cytoplasm. It carries out the reaction sn-glycerol 3-phosphate + NAD(+) = dihydroxyacetone phosphate + NADH + H(+). The catalysed reaction is sn-glycerol 3-phosphate + NADP(+) = dihydroxyacetone phosphate + NADPH + H(+). It participates in membrane lipid metabolism; glycerophospholipid metabolism. Its function is as follows. Catalyzes the reduction of the glycolytic intermediate dihydroxyacetone phosphate (DHAP) to sn-glycerol 3-phosphate (G3P), the key precursor for phospholipid synthesis. This Stenotrophomonas maltophilia (strain R551-3) protein is Glycerol-3-phosphate dehydrogenase [NAD(P)+].